A 512-amino-acid polypeptide reads, in one-letter code: Catalase (512 aa).

Residues H60 and N133 contribute to the active site. Residue Y344 participates in heme binding. Phosphoserine is present on S363. A compositionally biased stretch (basic and acidic residues) spans 488-505 (EVKKMEEKAPKPINKGEP). A disordered region spans residues 488–512 (EVKKMEEKAPKPINKGEPHMFQGSS).

The protein belongs to the catalase family. It depends on heme as a cofactor.

It is found in the peroxisome matrix. It catalyses the reaction 2 H2O2 = O2 + 2 H2O. Functionally, catalyzes the degradation of hydrogen peroxide (H(2)O(2)) generated by peroxisomal oxidases to water and oxygen, thereby protecting cells from the toxic effects of hydrogen peroxide. This is Catalase (cta1) from Schizosaccharomyces pombe (strain 972 / ATCC 24843) (Fission yeast).